The chain runs to 156 residues: Small ribosomal subunit protein uS7 (156 aa).

This sequence belongs to the universal ribosomal protein uS7 family. Part of the 30S ribosomal subunit. Contacts proteins S9 and S11.

One of the primary rRNA binding proteins, it binds directly to 16S rRNA where it nucleates assembly of the head domain of the 30S subunit. Is located at the subunit interface close to the decoding center, probably blocks exit of the E-site tRNA. This Chlorobaculum tepidum (strain ATCC 49652 / DSM 12025 / NBRC 103806 / TLS) (Chlorobium tepidum) protein is Small ribosomal subunit protein uS7.